The following is a 123-amino-acid chain: N(4)-acetylcytidine amidohydrolase (123 aa).

The 96-residue stretch at 6-101 (ITFYQRFEAD…EIIFWVIQFS (96 aa)) folds into the ASCH domain. Catalysis depends on K21, which acts as the Proton acceptor. S24 acts as the Nucleophile in catalysis. The Proton donor role is filled by E74.

The protein belongs to the N(4)-acetylcytidine amidohydrolase family.

It carries out the reaction N(4)-acetylcytidine + H2O = cytidine + acetate + H(+). The enzyme catalyses N(4)-acetyl-2'-deoxycytidine + H2O = 2'-deoxycytidine + acetate + H(+). The catalysed reaction is N(4)-acetylcytosine + H2O = cytosine + acetate + H(+). Its function is as follows. Catalyzes the hydrolysis of N(4)-acetylcytidine (ac4C). The sequence is that of N(4)-acetylcytidine amidohydrolase from Haemophilus influenzae (strain ATCC 51907 / DSM 11121 / KW20 / Rd).